Reading from the N-terminus, the 265-residue chain is Adenosylcobinamide-GDP ribazoletransferase (265 aa).

A run of 7 helical transmembrane segments spans residues 40–60 (IAYA…VVLV), 67–87 (LPAF…TGAF), 121–141 (GGCA…ALVA), 150–170 (LALV…LLAL), 191–211 (LACA…GFGI), 213–233 (TAFA…RLSG), and 243–263 (VAGA…LIFP).

Belongs to the CobS family. Mg(2+) serves as cofactor.

The protein localises to the cell inner membrane. It catalyses the reaction alpha-ribazole + adenosylcob(III)inamide-GDP = adenosylcob(III)alamin + GMP + H(+). The catalysed reaction is alpha-ribazole 5'-phosphate + adenosylcob(III)inamide-GDP = adenosylcob(III)alamin 5'-phosphate + GMP + H(+). The protein operates within cofactor biosynthesis; adenosylcobalamin biosynthesis; adenosylcobalamin from cob(II)yrinate a,c-diamide: step 7/7. Joins adenosylcobinamide-GDP and alpha-ribazole to generate adenosylcobalamin (Ado-cobalamin). Also synthesizes adenosylcobalamin 5'-phosphate from adenosylcobinamide-GDP and alpha-ribazole 5'-phosphate. The protein is Adenosylcobinamide-GDP ribazoletransferase of Xanthobacter autotrophicus (strain ATCC BAA-1158 / Py2).